A 73-amino-acid chain; its full sequence is Cell division protein ZapB (73 aa).

Residues 3 to 69 (LELLSKLETK…EKVTGLVGLL (67 aa)) are a coiled coil. Positions 30–50 (EKQKSSTLSEHNQQLNEQNQQ) are disordered. Low complexity predominate over residues 41-50 (NQQLNEQNQQ).

Belongs to the ZapB family. As to quaternary structure, homodimer. The ends of the coiled-coil dimer bind to each other, forming polymers. Interacts with FtsZ.

The protein localises to the cytoplasm. Functionally, non-essential, abundant cell division factor that is required for proper Z-ring formation. It is recruited early to the divisome by direct interaction with FtsZ, stimulating Z-ring assembly and thereby promoting cell division earlier in the cell cycle. Its recruitment to the Z-ring requires functional FtsA or ZipA. This chain is Cell division protein ZapB, found in Shewanella putrefaciens (strain CN-32 / ATCC BAA-453).